The following is a 159-amino-acid chain: ATP synthase subunit b (159 aa).

The helical transmembrane segment at 2 to 22 (EFNLVTIGFTIVNFIILMLIL) threads the bilayer.

This sequence belongs to the ATPase B chain family. In terms of assembly, F-type ATPases have 2 components, F(1) - the catalytic core - and F(0) - the membrane proton channel. F(1) has five subunits: alpha(3), beta(3), gamma(1), delta(1), epsilon(1). F(0) has three main subunits: a(1), b(2) and c(10-14). The alpha and beta chains form an alternating ring which encloses part of the gamma chain. F(1) is attached to F(0) by a central stalk formed by the gamma and epsilon chains, while a peripheral stalk is formed by the delta and b chains.

It localises to the cell membrane. In terms of biological role, f(1)F(0) ATP synthase produces ATP from ADP in the presence of a proton or sodium gradient. F-type ATPases consist of two structural domains, F(1) containing the extramembraneous catalytic core and F(0) containing the membrane proton channel, linked together by a central stalk and a peripheral stalk. During catalysis, ATP synthesis in the catalytic domain of F(1) is coupled via a rotary mechanism of the central stalk subunits to proton translocation. Component of the F(0) channel, it forms part of the peripheral stalk, linking F(1) to F(0). The chain is ATP synthase subunit b from Clostridium acetobutylicum (strain ATCC 824 / DSM 792 / JCM 1419 / IAM 19013 / LMG 5710 / NBRC 13948 / NRRL B-527 / VKM B-1787 / 2291 / W).